The chain runs to 624 residues: Actin-related protein 8 (624 aa).

Residue Met-1 is modified to N-acetylmethionine. The segment covering 1 to 25 (MTQAEKGEAENGKEKGGEKEKEQRG) has biased composition (basic and acidic residues). The disordered stretch occupies residues 1–29 (MTQAEKGEAENGKEKGGEKEKEQRGVKRP). ATP is bound by residues Ser-55 and Thr-56. Ser-132 bears the Phosphoserine mark. 283-286 (DVGD) contacts ATP. Position 412 is a phosphoserine (Ser-412). The disordered stretch occupies residues 430–462 (SKQEQSAKATADRKSASKPIGFEGDLRGQSSDL).

This sequence belongs to the actin family. ARP8 subfamily. As to quaternary structure, component of the chromatin remodeling INO80 complex; specifically part of a complex module associated with the DBINO domain of INO80. Exists as monomers and dimers, but the dimer is most probably the biologically relevant form required for stable interactions with histones that exploits the twofold symmetry of the nucleosome core.

The protein localises to the nucleus. It is found in the chromosome. Its function is as follows. Plays an important role in the functional organization of mitotic chromosomes. Exhibits low basal ATPase activity, and unable to polymerize. In terms of biological role, proposed core component of the chromatin remodeling INO80 complex which is involved in transcriptional regulation, DNA replication and probably DNA repair. Required for the recruitment of INO80 (and probably the INO80 complex) to sites of DNA damage Strongly prefer nucleosomes and H3-H4 tetramers over H2A-H2B dimers, suggesting it may act as a nucleosome recognition module within the complex. In Bos taurus (Bovine), this protein is Actin-related protein 8 (ACTR8).